The sequence spans 61 residues: Small ribosomal subunit protein uS14 (61 aa).

The Zn(2+) site is built by Cys-24, Cys-27, Cys-40, and Cys-43.

This sequence belongs to the universal ribosomal protein uS14 family. Zinc-binding uS14 subfamily. As to quaternary structure, part of the 30S ribosomal subunit. Contacts proteins S3 and S10. The cofactor is Zn(2+).

Functionally, binds 16S rRNA, required for the assembly of 30S particles and may also be responsible for determining the conformation of the 16S rRNA at the A site. The polypeptide is Small ribosomal subunit protein uS14 (Heliobacterium modesticaldum (strain ATCC 51547 / Ice1)).